The sequence spans 160 residues: Large ribosomal subunit protein uL13 (160 aa).

It belongs to the universal ribosomal protein uL13 family. As to quaternary structure, part of the 50S ribosomal subunit.

Functionally, this protein is one of the early assembly proteins of the 50S ribosomal subunit, although it is not seen to bind rRNA by itself. It is important during the early stages of 50S assembly. This chain is Large ribosomal subunit protein uL13, found in Orientia tsutsugamushi (strain Ikeda) (Rickettsia tsutsugamushi).